A 365-amino-acid polypeptide reads, in one-letter code: Chorismate synthase (365 aa).

Residues 41–61 form a disordered region; the sequence is IQKELDRRRPGQSEVSTPRHE. Arg48 contributes to the NADP(+) binding site. FMN contacts are provided by residues 125 to 127, Gly285, 300 to 304, and Arg327; these read RSS and KPTPS.

The protein belongs to the chorismate synthase family. FMNH2 is required as a cofactor.

The catalysed reaction is 5-O-(1-carboxyvinyl)-3-phosphoshikimate = chorismate + phosphate. Its pathway is metabolic intermediate biosynthesis; chorismate biosynthesis; chorismate from D-erythrose 4-phosphate and phosphoenolpyruvate: step 7/7. In terms of biological role, catalyzes the anti-1,4-elimination of the C-3 phosphate and the C-6 proR hydrogen from 5-enolpyruvylshikimate-3-phosphate (EPSP) to yield chorismate, which is the branch point compound that serves as the starting substrate for the three terminal pathways of aromatic amino acid biosynthesis. This reaction introduces a second double bond into the aromatic ring system. The polypeptide is Chorismate synthase (Methanosarcina barkeri (strain Fusaro / DSM 804)).